The following is a 446-amino-acid chain: Chromosomal replication initiator protein DnaA (446 aa).

The tract at residues 1 to 82 is domain I, interacts with DnaA modulators; sequence MENILDLWNQ…ELSIKFVIPQ (82 aa). Residues 83–103 form a domain II region; sequence NQDVEDFMPKPQVKKAVKEDT. The interval 104 to 332 is domain III, AAA+ region; that stretch reads SDFPQNMLNP…VAYSSLINKD (229 aa). Positions 154, 155, 156, 157, and 158 each coordinate ATP. Threonine 158 is a binding site for Mg(2+). An Initiator specific motif (ISM) motif is present at residues 182-206; the sequence is SEKFTNEFINSIRDNKAVDFRNRYR. Residues aspartate 214 and aspartate 215 each coordinate Mg(2+). The tract at residues 333-346 is linker; that stretch reads INADLAAEALKDII. The segment at 347 to 446 is domain IV, binds dsDNA; it reads PSSKPKVITI…HVKEIKEQLK (100 aa).

Belongs to the DnaA family. As to quaternary structure, the DNA replisome assembles sequentially on oriC in this order; DnaA, DnaD, DnaB, DnaI-DnaC helicase. Oligomerizes as a right-handed, spiral filament on DNA at oriC. Forms an ATP-dependent helix on DNA at oriC; both DnaD and YabA inhibit formation of the DnaA helix. Forms an ATP-dependent oligomer, formation is stimulated by ds- and ssDNA; monomeric ADP-Soj inhibits oligomer formation. Interacts with DnaD. Interacts with YabA, and via YabA, with the replication machinery subunit beta sliding clamp DnaN. Interacts with YabA via domain IIIa (residues 109-275). Isolated domain I forms a 1:1 complex with SirA. Interacts with Soj, probably via domain III. Interacts via domains I and III with CcrZ. Interacts via domain IV with skin prophage-like element protein YqaH.

It localises to the cytoplasm. The protein resides in the nucleoid. The enzyme catalyses ATP + H2O = ADP + phosphate + H(+). Its activity is regulated as follows. Oligomerization of DnaA can be controlled by Soj; monomeric ADP-Soj inhibits formation of the DnaA helix. YabA prevents the cooperative binding of DnaA-ATP to oriC-containing sequences; increased levels of DnaN (beta sliding clamp subunit of DNA polymerase) removes YabA from association with DnaA on the chromosome, enabling increased association of DnaA with its chromosomal binding sites. Both Soj and YabA chase DnaA from oriC site, YabA tethers DnaA to the DNA replication fork via the beta sliding clamp subunit DnaN. SirA antagonizes the ability of DnaA to bind to the replication origin, and thus decreases replication inititation during sporulation. Small protein YqaH, part of the skin prophage-like element, binds to DnaA and antagonizes its replication initiation and transcriptional regulation activities. Its function is as follows. Plays an essential role in the initiation and regulation of chromosomal replication. ATP-DnaA binds to the origin of replication (oriC) to initiate formation of the DNA replication initiation complex once per cell cycle. Binds directly to oriC at a 9 bp consensus (DnaA box): 5'-TTATCCACA-3' and separates the double-stranded (ds)DNA. Forms a right-handed helical filament on oriC DNA; dsDNA binds to the exterior of the filament while single-stranded (ss)DNA is stabilized in the filament's interior. The ATP-DnaA-oriC complex binds and stabilizes one strand of the AT-rich DNA unwinding element (DUE or basal unwinding system, BUS), permitting loading of DNA polymerase. Binds ATP with high affinity, ADP with lower affinity, but not AMP, cAMP or cGMP; ATP stimulates binding to DnaA boxes. Once bound promotes sequence-specific strand separation of DnaA-trios (3'-GAT-5' consensus) adjacent to oriC in the presence of ATP but not ADP. Domains III and IV are sufficient to separate dsDNA strands. The 'initiator specific motif' (ISM) of domain III contacts the middle adenine residue of the DnaA-trio probably stretching and stabilizing ssDNA. DnaA-trio recognition is co-operative and depends on DnaA self-assembly. The ssDNA serves as an assembly region for the replication machinery. Tethered to DnaN (beta sliding clamp subunit of DNA polymerase) and thus replication forks by YabA. During replication initiation DnaA-ATP binds cooperatively to sequences in oriC. YabA prevents this cooperative binding while still allowing DnaA to bind DNA. During the cell cycle an initial phase occurs in which DnaA is associated with origin regions, then the origin regions become spatially separate from the centrally sequestered DnaA molecules, and most DnaA molecules are unable to reassociate with origin regions. Does not require YabA to bind DNA. During sporulation SirA prevents DnaA association with the replication origin to prevent excessive chromosome replication. Overexpression induces the SOS response; increasing expression of downstream dnaN blocks this induction. Over-initiation of DNA replication is very deleterious; isolated suppressors in relA, ndrR, dnaC, cshA and crrZ increase replication elongation, decrease replication inititation or lead to a decrease in the replicative DNA helicase. Binds acidic phospholipids. The half-life of ADP-DnaA is 1.5 minutes, of ATP-DnaA is 5 minutes at 37 degrees Celsius; in E.coli the half-life of ADP-DnaA is about 45 minutes. Functionally, also acts as a transcriptional regulator. DnaA inhibits its own gene expression. DnaA binds specifically to the promoter regions of at least 20 operons (56 genes), including itself, sda and dnaB, and probably controls their expression in response to DNA replication inhibition. The polypeptide is Chromosomal replication initiator protein DnaA (Bacillus subtilis (strain 168)).